The sequence spans 94 residues: Co-chaperonin GroES (94 aa).

The protein belongs to the GroES chaperonin family. As to quaternary structure, heptamer of 7 subunits arranged in a ring. Interacts with the chaperonin GroEL.

Its subcellular location is the cytoplasm. In terms of biological role, together with the chaperonin GroEL, plays an essential role in assisting protein folding. The GroEL-GroES system forms a nano-cage that allows encapsulation of the non-native substrate proteins and provides a physical environment optimized to promote and accelerate protein folding. GroES binds to the apical surface of the GroEL ring, thereby capping the opening of the GroEL channel. This Ehrlichia chaffeensis (strain ATCC CRL-10679 / Arkansas) protein is Co-chaperonin GroES.